The primary structure comprises 246 residues: 4-aminobenzoate synthase (246 aa).

Fe(2+) contacts are provided by Glu88, His95, Glu149, His181, Asp185, and His188.

The protein belongs to the CADD family. Homodimer. It depends on Fe(2+) as a cofactor. Requires Mn(2+) as cofactor.

Functionally, involved in de novo para-aminobenzoate (PABA) biosynthesis. Acts as a self-sacrificing or 'suicide' enzyme that utilizes its own active site tyrosine residue(s) as the substrate for PABA synthesis. The side chain of the tyrosine residue is released from the protein backbone via cleavage of the C(alpha)-C(beta) bond, leaving a glycine in place of the original tyrosine residue. Reaction requires O(2) and a reduced dimetal cofactor. This Nitrosomonas europaea (strain ATCC 19718 / CIP 103999 / KCTC 2705 / NBRC 14298) protein is 4-aminobenzoate synthase.